A 336-amino-acid polypeptide reads, in one-letter code: MAKRMITTELMEEDVKLETSLRPQMLEDYIGQKKAKENLKVYIEAAKQRKESLDHVLFFGPPGLGKTTLAGIIANEMGVNLKTTAGPAIEKPGDMAAILNNLQEGDVLFIDEIHRLNRQVEELLYPAMEDYVIDIVIGKGATAKSIRLDLPRFTLVGATTRAGMLTAPLRDRFGVVHRLEFYTTEELKEIITRSAKVLQVEIDDCGATELARRSRGTPRLANRLLKRVRDFAQVKYDGRITEEVARFALDILEVDKLGLDHIDRQILVTMIEKFAGGPVGIDAIATTIGEDSGTVEEVYEPYLVQNGLILRTPRGRVVTQEAYLHCGLPYENKELS.

The interval 1-182 (MAKRMITTEL…FGVVHRLEFY (182 aa)) is large ATPase domain (RuvB-L). ATP contacts are provided by residues leucine 21, arginine 22, glycine 63, lysine 66, threonine 67, threonine 68, 129-131 (EDY), arginine 172, tyrosine 182, and arginine 219. Threonine 67 lines the Mg(2+) pocket. A small ATPAse domain (RuvB-S) region spans residues 183 to 253 (TTEELKEIIT…VARFALDILE (71 aa)). Residues 256–336 (KLGLDHIDRQ…GLPYENKELS (81 aa)) are head domain (RuvB-H). Residues arginine 311 and arginine 316 each coordinate DNA.

Belongs to the RuvB family. Homohexamer. Forms an RuvA(8)-RuvB(12)-Holliday junction (HJ) complex. HJ DNA is sandwiched between 2 RuvA tetramers; dsDNA enters through RuvA and exits via RuvB. An RuvB hexamer assembles on each DNA strand where it exits the tetramer. Each RuvB hexamer is contacted by two RuvA subunits (via domain III) on 2 adjacent RuvB subunits; this complex drives branch migration. In the full resolvosome a probable DNA-RuvA(4)-RuvB(12)-RuvC(2) complex forms which resolves the HJ.

The protein localises to the cytoplasm. It carries out the reaction ATP + H2O = ADP + phosphate + H(+). Functionally, the RuvA-RuvB-RuvC complex processes Holliday junction (HJ) DNA during genetic recombination and DNA repair, while the RuvA-RuvB complex plays an important role in the rescue of blocked DNA replication forks via replication fork reversal (RFR). RuvA specifically binds to HJ cruciform DNA, conferring on it an open structure. The RuvB hexamer acts as an ATP-dependent pump, pulling dsDNA into and through the RuvAB complex. RuvB forms 2 homohexamers on either side of HJ DNA bound by 1 or 2 RuvA tetramers; 4 subunits per hexamer contact DNA at a time. Coordinated motions by a converter formed by DNA-disengaged RuvB subunits stimulates ATP hydrolysis and nucleotide exchange. Immobilization of the converter enables RuvB to convert the ATP-contained energy into a lever motion, pulling 2 nucleotides of DNA out of the RuvA tetramer per ATP hydrolyzed, thus driving DNA branch migration. The RuvB motors rotate together with the DNA substrate, which together with the progressing nucleotide cycle form the mechanistic basis for DNA recombination by continuous HJ branch migration. Branch migration allows RuvC to scan DNA until it finds its consensus sequence, where it cleaves and resolves cruciform DNA. The chain is Holliday junction branch migration complex subunit RuvB from Lachnoclostridium phytofermentans (strain ATCC 700394 / DSM 18823 / ISDg) (Clostridium phytofermentans).